Reading from the N-terminus, the 150-residue chain is Monooxygenase dmxR10 (150 aa).

This sequence belongs to the avfA family.

Its pathway is secondary metabolite biosynthesis. In terms of biological role, monooxygenase; part of the gene cluster that mediates the biosynthesis of the dimeric xanthones cryptosporioptides. The pathway begins with the synthesis of atrochrysone thioester by the polyketide synthase dmx-nrPKS. The atrochrysone carboxyl ACP thioesterase dmxR1 then breaks the thioester bond and releases the atrochrysone carboxylic acid from dmx-nrPKS. Atrochrysone carboxylic acid is decarboxylated by the decarboxylase dmxR15, and oxidized by the anthrone oxygenase dmxR16 to yield emodin. Emodin is then reduced to emodin hydroquinone by the oxidoreductase dmxR7. A-ring reduction by the short chain dehydrogenase dmxR18, dehydration by the scytalone dehydratase-like protein dmxR17 and probable spontaneous re-oxidation, results in overall deoxygenation to chrysophanol. Baeyer-Villiger oxidation by the Baeyer-Villiger monooxygenase (BVMO) dmxR6 then yields monodictylactone in equilibrium with monodictyphenone. In the case of the cryptosporioptides biosynthesis, monodictylactone is reduced at C-12 to an alcohol (by the short chain dehydrogenases dmxR12 or dmxR8) and hydroxylated at C-5 by dmxR9, yielding the electron-rich aromatic which could eliminate H(2)O to form the ortho-quinonemethide, followed by tautomerisation to paraquinone and complete the formal reduction to produce the 10-methylgroup. Conjugate addition of C-4a-OH to the resulting paraquinone by the monooxygenase dmxR10 then gives cyclohexadienone, which is then reduced at C-5 by the short chain dehydrogenase dmxR3 to give the dihydroxanthone. The 6,7-epoxide in the cryptosporioptides could be introduced by the cytochrome P450 monooxygenase dmxL3. The highly reducing PKS dmxL2 manufactures butyrate, which is further carboxylated by dmxL1 to form ethylmalonate. It is not yet clear whether the carboxylation occurs while the butyrate is attached to the ACP of dmxL2, but this unusual fungal metabolite could then be esterified to O-5 by the O-acetyltransferase dmxR13. Finally, dimerization performed by dmxR5 gives the observed dimers cryptosporioptides A, B and C as the final products of the pathway. The sequence is that of Monooxygenase dmxR10 from Cryptosporiopsis sp. (strain 8999).